We begin with the raw amino-acid sequence, 83 residues long: RNA-binding protein Hfq (83 aa).

A Sm domain is found at 10 to 69 (DPFLNALRREHVPVSIYLVNGIKLQGQIESFDQYVVLLRNTVTQMVYKHAISTIVPGRAV).

Belongs to the Hfq family. As to quaternary structure, homohexamer.

RNA chaperone that binds small regulatory RNA (sRNAs) and mRNAs to facilitate mRNA translational regulation in response to envelope stress, environmental stress and changes in metabolite concentrations. Also binds with high specificity to tRNAs. This chain is RNA-binding protein Hfq, found in Delftia acidovorans (strain DSM 14801 / SPH-1).